We begin with the raw amino-acid sequence, 139 residues long: Toxin FitB (139 aa).

Residues 2 to 123 enclose the PINc domain; the sequence is ILLDTNVISE…HSLTVATRDT (122 aa). Residues aspartate 5 and aspartate 104 each contribute to the Mg(2+) site.

It belongs to the PINc/VapC protein family. In terms of assembly, forms a heterodimer with FitA, 4 FitAB heterodimers form a complex that binds to promoter DNA. The complex is also seen in solution. This protein does not actually contact DNA. Mg(2+) serves as cofactor.

Functionally, toxic component of a type II toxin-antitoxin (TA) system. Plays a role in the speed with which bacteria traverse human epithelial cells; disruption of the locus increases the speed of trafficking about 2-4-fold. FitAB binds to its own promoter better than FitA alone. The expected nuclease activity was not observed for the FitAB complex, perhaps because FitA (the antitoxin) prevents metal binding and thus catalysis by FitB. The polypeptide is Toxin FitB (fitB) (Neisseria gonorrhoeae (strain ATCC 700825 / FA 1090)).